We begin with the raw amino-acid sequence, 576 residues long: Arginine--tRNA ligase (576 aa).

The 'HIGH' region signature appears at 122-132; sequence PNVAKQMHVGH.

The protein belongs to the class-I aminoacyl-tRNA synthetase family. As to quaternary structure, monomer.

The protein localises to the cytoplasm. It catalyses the reaction tRNA(Arg) + L-arginine + ATP = L-arginyl-tRNA(Arg) + AMP + diphosphate. The chain is Arginine--tRNA ligase from Yersinia pseudotuberculosis serotype I (strain IP32953).